Consider the following 304-residue polypeptide: 33 kDa chaperonin (304 aa).

Cystine bridges form between cysteine 236/cysteine 238 and cysteine 269/cysteine 272.

It belongs to the HSP33 family. Post-translationally, under oxidizing conditions two disulfide bonds are formed involving the reactive cysteines. Under reducing conditions zinc is bound to the reactive cysteines and the protein is inactive.

Its subcellular location is the cytoplasm. Its function is as follows. Redox regulated molecular chaperone. Protects both thermally unfolding and oxidatively damaged proteins from irreversible aggregation. Plays an important role in the bacterial defense system toward oxidative stress. The polypeptide is 33 kDa chaperonin (Pelobacter propionicus (strain DSM 2379 / NBRC 103807 / OttBd1)).